Here is a 481-residue protein sequence, read N- to C-terminus: MFIEAIVLALTALILYSVYSVKSFNTTRPTDPPVYPVTVPFLGHIVQFGKNPLEFMQRCKRDLKSGVFTISIGGQRVTIVGDPHEHSRFFSPRNEILSPREVYTIMTPVFGEGVAYAAPYPRMREQLNFLAEELTIAKFQNFVPAIQHEVRKFMAENWKEDEGVINLLEDCGAMIINTACQCLFGEDLRKRLNARHFAQLLSKMESSLIPAAVFMPWLLRLPLPQSARCREARAELQKILGEIIVAREKEEASKDNNTSDLLGGLLKAVYRDGTRMSLHEVCGMIVAAMFAGQHTSTITTSWSMLHLMHPKNKKWLDKLHKEIDEFPAQLNYDNVMDEMPFAERCVRESIRRDPPLLMVMRMVKAEVKVGSYVVPKGDIIACSPLLSHHDEEAFPNPRLWDPERDEKVDGAFIGFGAGVHKCIGQKFALLQVKTILATAFREYDFQLLRDEVPDPDYHTMVVGPTLNQCLVKYTRKKKLPS.

The helical transmembrane segment at 1-21 threads the bilayer; sequence MFIEAIVLALTALILYSVYSV. C422 serves as a coordination point for heme.

It belongs to the cytochrome P450 family. Requires heme as cofactor.

Its subcellular location is the membrane. The enzyme catalyses a 14alpha-methyl steroid + 3 reduced [NADPH--hemoprotein reductase] + 3 O2 = a Delta(14) steroid + formate + 3 oxidized [NADPH--hemoprotein reductase] + 4 H2O + 4 H(+). The protein operates within steroid biosynthesis; zymosterol biosynthesis; zymosterol from lanosterol: step 1/6. In terms of biological role, catalyzes C14-demethylation of lanosterol which is critical for ergosterol biosynthesis. It transforms lanosterol into 4,4'-dimethyl cholesta-8,14,24-triene-3-beta-ol. Favors C4 dimethylated substrates, the substrate preference order is 24-methylenedihydrolanosterol &gt; 24,25-dihydrolanosterol &gt; lanosterol &gt; obtusifoliol &gt; norlanosterol. In Trypanosoma cruzi (strain CL Brener), this protein is Sterol 14-alpha demethylase.